The primary structure comprises 92 residues: Protein RESPONSE TO LOW SULFUR 4 (92 aa).

Residues 8 to 63 (VMVAASEVEELRQKNGEMEKAVEEMRKEMLQLWRRTQVAEEAEEHLCSQLAELEAE) are a coiled coil.

Its function is as follows. Required for flower development in short-day conditions. The protein is Protein RESPONSE TO LOW SULFUR 4 of Arabidopsis thaliana (Mouse-ear cress).